The chain runs to 396 residues: Elongation factor Tu (396 aa).

One can recognise a tr-type G domain in the interval 11–205; the sequence is KPHVNIGTIG…VIDDYIPTPK (195 aa). Residues 20–27 are G1; it reads GHVDHGKT. Position 20 to 27 (20 to 27) interacts with GTP; the sequence is GHVDHGKT. A Mg(2+)-binding site is contributed by Thr-27. Residues 61-65 form a G2 region; it reads GITIN. The interval 82–85 is G3; the sequence is DAPG. GTP contacts are provided by residues 82–86 and 137–140; these read DAPGH and NKTD. A G4 region spans residues 137–140; that stretch reads NKTD. The segment at 175–177 is G5; it reads SAL.

The protein belongs to the TRAFAC class translation factor GTPase superfamily. Classic translation factor GTPase family. EF-Tu/EF-1A subfamily. In terms of assembly, monomer.

It localises to the cytoplasm. The enzyme catalyses GTP + H2O = GDP + phosphate + H(+). In terms of biological role, GTP hydrolase that promotes the GTP-dependent binding of aminoacyl-tRNA to the A-site of ribosomes during protein biosynthesis. The polypeptide is Elongation factor Tu (Limosilactobacillus reuteri (strain DSM 20016) (Lactobacillus reuteri)).